We begin with the raw amino-acid sequence, 212 residues long: High frequency lysogenization protein HflD homolog (212 aa).

It belongs to the HflD family.

Its subcellular location is the cytoplasm. It localises to the cell inner membrane. This Stutzerimonas stutzeri (strain A1501) (Pseudomonas stutzeri) protein is High frequency lysogenization protein HflD homolog.